A 247-amino-acid chain; its full sequence is Eukaryotic translation initiation factor 6 (247 aa).

Phosphoserine; by CK1 occurs at positions 174 and 175.

Belongs to the eIF-6 family. As to quaternary structure, monomer. Associates with the 60S ribosomal subunit. Post-translationally, phosphorylation at Ser-174 and Ser-175 promotes nuclear export.

It localises to the cytoplasm. Its subcellular location is the nucleus. It is found in the nucleolus. Its function is as follows. Binds to the 60S ribosomal subunit and prevents its association with the 40S ribosomal subunit to form the 80S initiation complex in the cytoplasm. Is also involved in ribosome biogenesis. Associates with pre-60S subunits in the nucleus and is involved in its nuclear export. The polypeptide is Eukaryotic translation initiation factor 6 (tif6) (Emericella nidulans (strain FGSC A4 / ATCC 38163 / CBS 112.46 / NRRL 194 / M139) (Aspergillus nidulans)).